Reading from the N-terminus, the 444-residue chain is Cysteine proteinase 2 (444 aa).

Residues 1–19 constitute a signal peptide (or 27); the sequence is MATSRAALCAVAVVCVVLA. Positions 20–124 are cleaved as a propeptide — activation peptide; that stretch reads AACAPARAIH…HYRKARADLS (105 aa). Cys147 and Cys188 form a disulfide bridge. Cys150 is an active-site residue. N-linked (GlcNAc...) asparagine glycosylation is present at Asn228. Residues His289 and Asn309 contribute to the active site. N-linked (GlcNAc...) asparagine glycosylation is present at Asn372.

This sequence belongs to the peptidase C1 family.

It is found in the lysosome. The cysteine proteinases have a potential role in host-parasite interaction and virulence. This chain is Cysteine proteinase 2 (CYS2), found in Leishmania pifanoi.